We begin with the raw amino-acid sequence, 212 residues long: Uridine kinase (212 aa).

Residue 13–20 coordinates ATP; it reads GGSGSGKT.

It belongs to the uridine kinase family.

It localises to the cytoplasm. It catalyses the reaction uridine + ATP = UMP + ADP + H(+). The catalysed reaction is cytidine + ATP = CMP + ADP + H(+). The protein operates within pyrimidine metabolism; CTP biosynthesis via salvage pathway; CTP from cytidine: step 1/3. Its pathway is pyrimidine metabolism; UMP biosynthesis via salvage pathway; UMP from uridine: step 1/1. The polypeptide is Uridine kinase (Bacillus cereus (strain B4264)).